We begin with the raw amino-acid sequence, 86 residues long: Cell division topological specificity factor (86 aa).

Belongs to the MinE family.

Functionally, prevents the cell division inhibition by proteins MinC and MinD at internal division sites while permitting inhibition at polar sites. This ensures cell division at the proper site by restricting the formation of a division septum at the midpoint of the long axis of the cell. This Rhizobium etli (strain ATCC 51251 / DSM 11541 / JCM 21823 / NBRC 15573 / CFN 42) protein is Cell division topological specificity factor.